The sequence spans 197 residues: Signal peptidase complex catalytic subunit SEC11 (197 aa).

Topologically, residues 1–14 (MLSSLAPYMANPRQ) are cytoplasmic. Residues 15-33 (TLTQVLNFALVLSTAFMLW) traverse the membrane as a helical; Signal-anchor for type II membrane protein segment. At 34-197 (KGLSVVTNST…MGLMVVLQRE (164 aa)) the chain is on the lumenal side. Asn41 is a glycosylation site (N-linked (GlcNAc...) asparagine). Active-site charge relay system residues include Ser53 and His92. The segment covering 102 to 115 (PGREDKKSVKKGGE) has biased composition (basic and acidic residues). Residues 102–134 (PGREDKKSVKKGGEEGEETSSTPSQKLLTKGDN) are disordered. The Charge relay system role is filled by Asp139. The tract at residues 183–194 (VLLGFMGLMVVL) is C-terminal short (CTS) helix.

This sequence belongs to the peptidase S26B family. Component of the signal peptidase complex (SPC) composed of a catalytic subunit SEC11 and three accessory subunits SPC1, SPC2 and SPC3. The complex induces a local thinning of the ER membrane which is used to measure the length of the signal peptide (SP) h-region of protein substrates. This ensures the selectivity of the complex towards h-regions shorter than 18-20 amino acids. SPC associates with the translocon complex.

Its subcellular location is the endoplasmic reticulum membrane. The catalysed reaction is Cleavage of hydrophobic, N-terminal signal or leader sequences from secreted and periplasmic proteins.. Functionally, catalytic component of the signal peptidase complex (SPC) which catalyzes the cleavage of N-terminal signal sequences from nascent proteins as they are translocated into the lumen of the endoplasmic reticulum. Specifically cleaves N-terminal signal peptides that contain a hydrophobic alpha-helix (h-region) shorter than 18-20 amino acids. The sequence is that of Signal peptidase complex catalytic subunit SEC11 (SEC11) from Paracoccidioides lutzii (strain ATCC MYA-826 / Pb01) (Paracoccidioides brasiliensis).